Reading from the N-terminus, the 711-residue chain is Interferon-induced GTP-binding protein Mx2 (711 aa).

Disordered regions lie at residues 1 to 26 (MPKP…HKEM) and 62 to 88 (MLTL…NLYS). Low complexity predominate over residues 66–82 (SPQQPGGKSGQQTSKGP). A Dynamin-type G domain is found at 112–383 (DLALPTIAVI…LIGHISKSLP (272 aa)). The G1 motif stretch occupies residues 122–129 (GDQSSGKS). A GTP-binding site is contributed by 122–129 (GDQSSGKS). Positions 147–149 (ITR) are G2 motif. The interval 221 to 224 (DLPG) is G3 motif. GTP is bound by residues 221-225 (DLPGI) and 290-293 (TKPD). Positions 290–293 (TKPD) are G4 motif. Residues 322–325 (KCRG) form a G5 motif region. Residues 619–710 (ITEIGVHVNA…TLSKFAQSLQ (92 aa)) form the GED domain.

It belongs to the TRAFAC class dynamin-like GTPase superfamily. Dynamin/Fzo/YdjA family. As to expression, ubiquitous.

Its subcellular location is the cytoplasm. The protein localises to the nucleus. Functionally, interferon-induced dynamin-like GTPase with antiviral activity against influenza virus A (FLUAV). The sequence is that of Interferon-induced GTP-binding protein Mx2 (MX2) from Sus scrofa (Pig).